Consider the following 833-residue polypeptide: Urease (833 aa).

In terms of domain architecture, Urease spans Gly395–Tyr833. Ni(2+)-binding residues include His400 and His402. His402 and Ala433 together coordinate urea. Lys483 is a Ni(2+) binding site. Lys483 carries the post-translational modification N6-carboxylysine. Positions 485 and 512 each coordinate urea. Residues His512 and His538 each coordinate Ni(2+). The active-site Proton donor is the His586. Residue Asp626 participates in Ni(2+) binding. Residue Ala629 coordinates urea.

In the C-terminal section; belongs to the metallo-dependent hydrolases superfamily. Urease alpha subunit family. Homohexamer. Requires Ni(2+) as cofactor. Post-translationally, carboxylation allows a single lysine to coordinate two nickel ions.

The enzyme catalyses urea + 2 H2O + H(+) = hydrogencarbonate + 2 NH4(+). It functions in the pathway nitrogen metabolism; urea degradation; CO(2) and NH(3) from urea (urease route): step 1/1. Its activity is regulated as follows. The urease accessory proteins URE4, URE6 and URE7 are required for urease activity, URE7 supplying nickel for the functional urease. Its function is as follows. Plays a nutritional role via nitrogen acquisition in the environment. Contributes to the central nervous system invasion by enhancing yeast sequestration within microcapillary beds (such as within the brain) during hematogenous spread, thereby facilitating blood-to-brain invasion by C.neoformans. Affects fitness within the mammalian phagosome, promoting non-lytic exocytosis while delaying intracellular replication and thus reducing phagolysosomal membrane damage, events that could facilitate cryptococcal dissemination when transported inside macrophages. Urease activity is also associated with the regulation of key intracellular metabolic pathways, including melanin biosynthesis, polyamine biosynthesis, as well as intracellular levels of proline and reactive oxygen species. This Cryptococcus neoformans var. grubii serotype A (strain H99 / ATCC 208821 / CBS 10515 / FGSC 9487) (Filobasidiella neoformans var. grubii) protein is Urease.